The chain runs to 352 residues: Phosphoribosylformylglycinamidine cyclo-ligase (352 aa).

Belongs to the AIR synthase family.

It localises to the cytoplasm. It carries out the reaction 2-formamido-N(1)-(5-O-phospho-beta-D-ribosyl)acetamidine + ATP = 5-amino-1-(5-phospho-beta-D-ribosyl)imidazole + ADP + phosphate + H(+). It participates in purine metabolism; IMP biosynthesis via de novo pathway; 5-amino-1-(5-phospho-D-ribosyl)imidazole from N(2)-formyl-N(1)-(5-phospho-D-ribosyl)glycinamide: step 2/2. The sequence is that of Phosphoribosylformylglycinamidine cyclo-ligase from Pseudomonas entomophila (strain L48).